The sequence spans 332 residues: HPr kinase/phosphorylase (332 aa).

Active-site residues include His-153 and Lys-174. 168 to 175 (GKSGLGKS) is an ATP binding site. Ser-175 provides a ligand contact to Mg(2+). The active-site Proton acceptor; for phosphorylation activity. Proton donor; for dephosphorylation activity is the Asp-192. Residues 217–226 (MEIRGLGVVD) form an important for the catalytic mechanism of both phosphorylation and dephosphorylation region. Glu-218 lines the Mg(2+) pocket. Arg-259 is a catalytic residue. The tract at residues 280 to 285 (PIFPGK) is important for the catalytic mechanism of dephosphorylation.

It belongs to the HPrK/P family. Homohexamer. It depends on Mg(2+) as a cofactor.

The catalysed reaction is [HPr protein]-L-serine + ATP = [HPr protein]-O-phospho-L-serine + ADP + H(+). It catalyses the reaction [HPr protein]-O-phospho-L-serine + phosphate + H(+) = [HPr protein]-L-serine + diphosphate. Catalyzes the ATP- as well as the pyrophosphate-dependent phosphorylation of a specific serine residue in HPr, a phosphocarrier protein of the phosphoenolpyruvate-dependent sugar phosphotransferase system (PTS). HprK/P also catalyzes the pyrophosphate-producing, inorganic phosphate-dependent dephosphorylation (phosphorolysis) of seryl-phosphorylated HPr (P-Ser-HPr). The sequence is that of HPr kinase/phosphorylase from Chlorobium phaeovibrioides (strain DSM 265 / 1930) (Prosthecochloris vibrioformis (strain DSM 265)).